A 64-amino-acid polypeptide reads, in one-letter code: Large ribosomal subunit protein bL33 (64 aa).

Residues 19–40 (TSTDPKRSNGVSRYTTEKNRRN) form a disordered region.

This sequence belongs to the bacterial ribosomal protein bL33 family.

This is Large ribosomal subunit protein bL33 from Prochlorococcus marinus (strain MIT 9215).